The chain runs to 87 residues: U3-theraphotoxin-Hhn1f (87 aa).

The first 24 residues, 1-24 (MVNMKASMFLTSAGLVLLFVVCYA), serve as a signal peptide directing secretion. Residues 25–52 (SESEEKEFPKEMLSSIFAVDNDFKQEER) constitute a propeptide that is removed on maturation. Intrachain disulfides connect Cys-54/Cys-67, Cys-61/Cys-72, and Cys-66/Cys-79.

Belongs to the neurotoxin 10 (Hwtx-1) family. 51 (Hntx-8) subfamily. Hntx-8 sub-subfamily. Expressed by the venom gland.

The protein localises to the secreted. Functionally, ion channel inhibitor. This Cyriopagopus hainanus (Chinese bird spider) protein is U3-theraphotoxin-Hhn1f.